The sequence spans 532 residues: Methionine--tRNA ligase (532 aa).

Positions 16-26 match the 'HIGH' region motif; sequence YYVNDVPHLGS. Cysteine 131, cysteine 134, cysteine 149, and histidine 152 together coordinate Zn(2+). The 'KMSKS' region signature appears at 305–309; that stretch reads KMGKS. Residue lysine 308 participates in ATP binding.

Belongs to the class-I aminoacyl-tRNA synthetase family. MetG type 2A subfamily. As to quaternary structure, monomer. It depends on Zn(2+) as a cofactor.

Its subcellular location is the cytoplasm. The enzyme catalyses tRNA(Met) + L-methionine + ATP = L-methionyl-tRNA(Met) + AMP + diphosphate. In terms of biological role, is required not only for elongation of protein synthesis but also for the initiation of all mRNA translation through initiator tRNA(fMet) aminoacylation. In Synechocystis sp. (strain ATCC 27184 / PCC 6803 / Kazusa), this protein is Methionine--tRNA ligase (metG).